The chain runs to 244 residues: Aliphatic sulfonates import ATP-binding protein SsuB 2 (244 aa).

Residues 13–229 form the ABC transporter domain; it reads VQVRSLVRGF…ALGDSKFHEF (217 aa). Position 45-52 (45-52) interacts with ATP; it reads GKSGSGKS.

This sequence belongs to the ABC transporter superfamily. Aliphatic sulfonates importer (TC 3.A.1.17.2) family. In terms of assembly, the complex is composed of two ATP-binding proteins (SsuB), two transmembrane proteins (SsuC) and a solute-binding protein (SsuA).

It is found in the cell membrane. The catalysed reaction is ATP + H2O + aliphatic sulfonate-[sulfonate-binding protein]Side 1 = ADP + phosphate + aliphatic sulfonateSide 2 + [sulfonate-binding protein]Side 1.. In terms of biological role, part of the ABC transporter complex SsuABC involved in aliphatic sulfonates import. Responsible for energy coupling to the transport system. This Rhodococcus jostii (strain RHA1) protein is Aliphatic sulfonates import ATP-binding protein SsuB 2.